Reading from the N-terminus, the 300-residue chain is Epimerase family protein SAR0825 (300 aa).

It belongs to the NAD(P)-dependent epimerase/dehydratase family. SDR39U1 subfamily.

This chain is Epimerase family protein SAR0825, found in Staphylococcus aureus (strain MRSA252).